We begin with the raw amino-acid sequence, 1409 residues long: Inositol hexakisphosphate and diphosphoinositol-pentakisphosphate kinase 1 (1409 aa).

64–65 contacts substrate; that stretch reads KK. Residues Arg145, Lys198, His205, Arg224, 248 to 251, and 257 to 259 each bind ATP; these read EEFM and DVK. 224 to 225 is a substrate binding site; the sequence is RK. 2 residues coordinate substrate: Lys259 and Arg273. ATP is bound by residues Ser275, Asp320, and 332–334; that span reads DVN. 337–340 lines the substrate pocket; sequence SFVK. The polyphosphoinositide-binding domain stretch occupies residues 382–453; sequence PTTSGTMMEL…VLDITRLLLA (72 aa). Residues 891-996 form a disordered region; the sequence is GVEEEGSAPA…PTEMKQSGLG (106 aa). Phosphoserine occurs at positions 920 and 963. The segment covering 981-996 has biased composition (polar residues); sequence FSSSRPPTEMKQSGLG. Ser1013 and Ser1049 each carry phosphoserine. Positions 1110–1119 are enriched in polar residues; the sequence is MHSSQASDNP. Residues 1110–1183 are disordered; it reads MHSSQASDNP…PSLNSHVAEE (74 aa). 2 positions are modified to phosphoserine: Ser1121 and Ser1128. The segment covering 1144–1162 has biased composition (low complexity); the sequence is SSGPSSTVSSAGPSSPTTV. Residues 1163-1178 show a composition bias toward polar residues; sequence DGNSQFGFSDQPSLNS.

The protein belongs to the histidine acid phosphatase family. VIP1 subfamily.

It localises to the cytoplasm. Its subcellular location is the cytosol. It is found in the cell membrane. The enzyme catalyses 1D-myo-inositol hexakisphosphate + ATP = 1-diphospho-1D-myo-inositol 2,3,4,5,6-pentakisphosphate + ADP. It carries out the reaction 5-diphospho-1D-myo-inositol 1,2,3,4,6-pentakisphosphate + ATP + H(+) = 1,5-bis(diphospho)-1D-myo-inositol 2,3,4,6-tetrakisphosphate + ADP. Bifunctional inositol kinase that acts in concert with the IP6K kinases IP6K1, IP6K2 and IP6K3 to synthesize the diphosphate group-containing inositol pyrophosphates diphosphoinositol pentakisphosphate, PP-InsP5, and bis-diphosphoinositol tetrakisphosphate, (PP)2-InsP4. PP-InsP5 and (PP)2-InsP4, also respectively called InsP7 and InsP8, regulate a variety of cellular processes, including apoptosis, vesicle trafficking, cytoskeletal dynamics, exocytosis, insulin signaling and neutrophil activation. Phosphorylates inositol hexakisphosphate (InsP6) at position 1 to produce PP-InsP5 which is in turn phosphorylated by IP6Ks to produce (PP)2-InsP4. Alternatively, phosphorylates PP-InsP5 at position 1, produced by IP6Ks from InsP6, to produce (PP)2-InsP4. Activated when cells are exposed to hyperosmotic stress. In Pongo abelii (Sumatran orangutan), this protein is Inositol hexakisphosphate and diphosphoinositol-pentakisphosphate kinase 1.